The sequence spans 246 residues: Submandibular gland secretory Glx-rich protein CA (246 aa).

An N-terminal signal peptide occupies residues 1 to 18 (MLVVLLTAALLALSSAQG). The interval 14 to 223 (SSAQGTDEEV…SGRPKKPLLP (210 aa)) is disordered. Low complexity-rich tracts occupy residues 39–50 (PVDSGSDPPSAD), 58–71 (EGESAAPANEEPPA), 81–93 (QQEPTQAENQEPP), 104–116 (QQEPTQAENQEPP), 127–141 (QQEPTQAEDQQPPAT), 150–159 (QQESTQAENQ), and 178–196 (VESPPSSPENSQEQPQQTN). A run of 5 repeats spans residues 67 to 89 (EEPPATSGSEEEQQQQEPTQAEN), 90 to 112 (QEPPATSGSEEEQQQQEPTQAEN), 113 to 135 (QEPPATSGSEEEQQQQEPTQAED), 136 to 158 (QQPPATSGSEEEQQQQESTQAEN), and 159 to 181 (QEPSDSAGEGQETQPEEGNVESP). A 5 X 23 AA tandem repeats region spans residues 67-181 (EEPPATSGSE…QPEEGNVESP (115 aa)). A compositionally biased stretch (basic and acidic residues) spans 197 to 216 (PEEKPPAPKTQEEPQHDSGR).

In terms of tissue distribution, submandibular gland acinar cells.

The protein localises to the secreted. In terms of biological role, GRP proteins have a marked affinity for hydroxyapatite. They may play a role in the formation of the protective acquired pellicle at the saliva-tooth interface. The sequence is that of Submandibular gland secretory Glx-rich protein CA (Grpca) from Rattus norvegicus (Rat).